A 418-amino-acid chain; its full sequence is Glutamyl-tRNA reductase (418 aa).

Residues 49-52 (TCNR), Ser-108, 113-115 (EPQ), and Gln-119 contribute to the substrate site. Cys-50 acts as the Nucleophile in catalysis. 188 to 193 (GAGETI) provides a ligand contact to NADP(+).

Belongs to the glutamyl-tRNA reductase family. In terms of assembly, homodimer.

It carries out the reaction (S)-4-amino-5-oxopentanoate + tRNA(Glu) + NADP(+) = L-glutamyl-tRNA(Glu) + NADPH + H(+). Its pathway is porphyrin-containing compound metabolism; protoporphyrin-IX biosynthesis; 5-aminolevulinate from L-glutamyl-tRNA(Glu): step 1/2. In terms of biological role, catalyzes the NADPH-dependent reduction of glutamyl-tRNA(Glu) to glutamate 1-semialdehyde (GSA). This is Glutamyl-tRNA reductase from Aliivibrio fischeri (strain MJ11) (Vibrio fischeri).